We begin with the raw amino-acid sequence, 931 residues long: Histone-lysine N-methyltransferase EZ1 (931 aa).

The segment covering 1–30 (MEAEAAAAVVASSASASASAGRSRPSSSAA) has biased composition (low complexity). 3 disordered regions span residues 1 to 37 (MEAE…SNSA), 372 to 450 (PTHS…ITNR), and 491 to 549 (RNGN…YDSS). Over residues 375-385 (SSDNVMNQPGS) the composition is skewed to polar residues. Basic residues predominate over residues 386–398 (NRKKNGSSGRKTK). A compositionally biased stretch (polar residues) spans 423–433 (SNKSPQHSPSP). Positions 500-509 (SSQQSSPSTR) are enriched in low complexity. Over residues 528–549 (AHNDSTEEANNRHSATDGYDSS) the composition is skewed to basic and acidic residues. In terms of domain architecture, SANT spans 565-615 (YLRSWKAIEQGLLVKGLEIFGRNSCLIARNLLGGMKTCKDVFQYMNYIENN). Residues 664–763 (FKRITERKDQ…TLGVPNQRGD (100 aa)) form the CXC domain. The SET domain maps to 778 to 893 (QRVLLGRSDV…AGEELFYDYR (116 aa)). Positions 903 to 915 (ARKPEASGAKDDG) are enriched in basic and acidic residues. A disordered region spans residues 903 to 931 (ARKPEASGAKDDGQPFNGRAKKLAQNNRG).

The protein belongs to the class V-like SAM-binding methyltransferase superfamily. Histone-lysine methyltransferase family. EZ subfamily. As to expression, widely expressed.

It is found in the nucleus. The catalysed reaction is L-lysyl(27)-[histone H3] + 3 S-adenosyl-L-methionine = N(6),N(6),N(6)-trimethyl-L-lysyl(27)-[histone H3] + 3 S-adenosyl-L-homocysteine + 3 H(+). Functionally, polycomb group (PcG) protein. Catalytic subunit of some PcG multiprotein complex, which methylates 'Lys-27' of histone H3, leading to transcriptional repression of the affected target genes. PcG proteins are not required to initiate repression, but to maintain it during later stages of development. In Zea mays (Maize), this protein is Histone-lysine N-methyltransferase EZ1 (EZ1).